Here is a 403-residue protein sequence, read N- to C-terminus: Coiled-coil domain-containing glutamate-rich protein 1 (403 aa).

Basic and acidic residues predominate over residues Met1–Pro11. Disordered stretches follow at residues Met1–Ile23, Ile51–Phe70, Arg134–Asp164, Gln202–Asp241, and Pro261–Arg350. A compositionally biased stretch (basic residues) spans Gly137 to Phe157. Residues Gln209–Glu220 show a composition bias toward low complexity. A compositionally biased stretch (polar residues) spans Pro261–Thr271. Residues Val275–Glu346 are compositionally biased toward acidic residues. The stretch at Cys292–Glu353 forms a coiled coil.

Expressed in testis.

The protein resides in the nucleus. In terms of biological role, regulator of histone epigenetic modifications and chromatin compaction into the sperm head, required for histone-to-protamine (HTP) transition. HTP is a key event in which somatic histones are first replaced by testis-specific histone variants, then transition proteins (TNPs) are incorporated into the spermatid nucleus, and finally protamines (PRMs) replace the TNPs to promote chromatin condensation. This Mus musculus (Mouse) protein is Coiled-coil domain-containing glutamate-rich protein 1 (Ccer1).